Consider the following 503-residue polypeptide: MALRAKAEVCMAAPWLSLQRARALGTRATRVPRTVLPFEAMPRRPGNRWLRLLQIWREQGYEHLHLEVHQTFQELGPIFRYDLGGAGMVCVMLPEDVEKLQQVDSLNPRRMSLEPWVAYRQHRGHKCGVFLLNGPEWRFNRLRLNPDVLSPKAVQRFLPMVDAVARDFSQALRKKVVQNARESVTLDIQPSIFHYTIEASNLALFGERLGLVGHSPSSASLSFLHALEVMFKSTVQLMFMPRSLSRWTSPKVWKEHFEAWDCIFQYGDNCIQKIYQELALSRPQQYTSIVAELLLNAELSPDAIKANSMELTAGSVDTTVFPLLMTLFELARNPNVQQALRQESLAAAASISEHPQKATTELPLLRAALKETLRLYPVGLFLERVVSSDLVLQNYHIPAGTLVRVFLYSLGRNPALFPRPERYNPQRWLDIRGSGRNFYHVPFGFGMRQCLGRRLAEAEMLLLLHHVLKHLQVETLTQEDIKMVYSFILRPSTFPLLTFRAIN.

The N-terminal 24 residues, 1–24 (MALRAKAEVCMAAPWLSLQRARAL), are a transit peptide targeting the mitochondrion. Position 450 (cysteine 450) interacts with heme.

Belongs to the cytochrome P450 family. The cofactor is heme.

The protein localises to the mitochondrion inner membrane. The catalysed reaction is a steroid + 2 reduced [adrenodoxin] + O2 + 2 H(+) = an 11beta-hydroxysteroid + 2 oxidized [adrenodoxin] + H2O. It carries out the reaction 11-deoxycortisol + 2 reduced [adrenodoxin] + O2 + 2 H(+) = cortisol + 2 oxidized [adrenodoxin] + H2O. It catalyses the reaction 21-hydroxyprogesterone + 2 reduced [adrenodoxin] + O2 + 2 H(+) = corticosterone + 2 oxidized [adrenodoxin] + H2O. The enzyme catalyses 21-hydroxyprogesterone + 2 reduced [adrenodoxin] + O2 + 2 H(+) = 18-hydroxy-11-deoxycorticosterone + 2 oxidized [adrenodoxin] + H2O. The catalysed reaction is 21-hydroxyprogesterone + 2 reduced [adrenodoxin] + O2 + 2 H(+) = 19-hydroxy-11-deoxycorticosterone + 2 oxidized [adrenodoxin] + H2O. It carries out the reaction cortisol + 2 reduced [adrenodoxin] + O2 + 2 H(+) = 18-hydroxycortisol + 2 oxidized [adrenodoxin] + H2O. It catalyses the reaction 11-deoxycortisol + 2 reduced [adrenodoxin] + O2 + 2 H(+) = 18-hydroxy-11-deoxycortisol + 2 oxidized [adrenodoxin] + H2O. The protein operates within steroid biosynthesis; glucocorticoid biosynthesis. Its pathway is steroid hormone biosynthesis. In terms of biological role, a cytochrome P450 monooxygenase involved in the biosynthesis of adrenal corticoids. Catalyzes a variety of reactions that are essential for many species, including detoxification, defense, and the formation of endogenous chemicals like steroid hormones. Steroid 11beta, 18- and 19-hydroxylase with preferred regioselectivity at 11beta, then 18, and lastly 19. Catalyzes the hydroxylation of 11-deoxycortisol and 11-deoxycorticosterone (21-hydroxyprogesterone) at 11beta position, yielding cortisol or corticosterone, respectively, but cannot produce aldosterone. Mechanistically, uses molecular oxygen inserting one oxygen atom into a substrate for hydroxylation and reducing the second into a water molecule. Two electrons are provided by NADPH via a two-protein mitochondrial transfer system comprising flavoprotein FDXR (adrenodoxin/ferredoxin reductase) and nonheme iron-sulfur protein FDX1 or FDX2 (adrenodoxin/ferredoxin). Due to its lack of 18-oxidation activity, it is incapable of generating aldosterone. Could also be involved in the androgen metabolic pathway. The polypeptide is Cytochrome P450 11B1, mitochondrial (CYP11B1) (Papio hamadryas ursinus (Chacma baboon)).